Reading from the N-terminus, the 388-residue chain is bZIP transcription factor 1-D (388 aa).

Disordered stretches follow at residues 1–49, 103–249, 261–316, and 348–388; these read MGSS…PIPP, FAPY…GPTT, TASS…RKQA, and ELLS…KDTN. 2 stretches are compositionally biased toward low complexity: residues 23–33 and 117–129; these read PPATSSTATPT and AAGT…TAGG. Residues 169–179 are compositionally biased toward polar residues; that stretch reads SGASANGTISQ. Residues 180–193 show a composition bias toward low complexity; sequence SGESGSESSSEGSE. Residues 214-231 show a composition bias toward polar residues; it reads RSSQNGVSPSPSQAQLKQ. Residues 293–356 form the bZIP domain; sequence ELKRQKRKQS…DELLSKNSSL (64 aa). The segment at 295–314 is basic motif; sequence KRQKRKQSNRDSARRSRLRK. Residues 302 to 316 are compositionally biased toward basic and acidic residues; sequence SNRDSARRSRLRKQA. The leucine-zipper stretch occupies residues 321-356; it reads LAQRAEVLKQENASLKDEVSRIRKEYDELLSKNSSL. Basic and acidic residues-rich tracts occupy residues 359 to 369 and 375 to 388; these read NVGDKQHKTDE and KLQH…KDTN.

It belongs to the bZIP family. Highly expressed in roots and at lower levels in stems and leaves.

Its subcellular location is the nucleus. In terms of biological role, probable transcription factor that may be involved in responses to fungal pathogen infection and abiotic stresses. In Triticum aestivum (Wheat), this protein is bZIP transcription factor 1-D.